The chain runs to 1104 residues: Partner and localizer of BRCA2 (1104 aa).

The tract at residues 1–157 is required for its oligomerization and is important for its focal concentration at DNA damage sites; that stretch reads MEELSGKPLS…WEKSSVSQEK (157 aa). Positions 1-195 are interaction with RAD51; the sequence is MEELSGKPLS…TPVSEKTHLL (195 aa). Residues 1-308 form an interaction with BRCA1 region; it reads MEELSGKPLS…RAHGQLPGSP (308 aa). Residues 9 to 48 are a coiled coil; that stretch reads LSYAEKEKLKEKLAFLKKEYSRTLARLQRAKRAEKAKNSK. Residues 39 to 52 show a composition bias toward basic and acidic residues; the sequence is KRAEKAKNSKKAIE. Disordered regions lie at residues 39 to 91, 122 to 157, and 243 to 272; these read KRAE…TGEN, GQLL…SQEK, and PSCT…TQGP. Polar residues-rich tracts occupy residues 59–70 and 138–154; these read EASSQLSHSESI and NTLP…SSVS. Residue Ser274 is modified to Phosphoserine. Residues 304–354 form a disordered region; it reads LPGSPNSCSVNDLTHSNLPANSTPNSKSLKSPSNTVDERNEPLQEDEILGP. A compositionally biased stretch (polar residues) spans 306–338; sequence GSPNSCSVNDLTHSNLPANSTPNSKSLKSPSNT. The residue at position 364 (Ser364) is a Phosphoserine. The interval 374–424 is chAM (Chromatin-association motif); required for chromatin association, mediates nucleosome association; that stretch reads SCTMLEGLLFPAEYYVRTTRRMSDCQRKIALEAVIQSHLGVKKKELKKKTK. Disordered regions lie at residues 417 to 494 and 581 to 730; these read KELK…SART and LQRD…TPLP. Position 432 is a phosphoserine (Ser432). A compositionally biased stretch (low complexity) spans 446-462; sequence TSTGQSSSGSLSQKLLS. A compositionally biased stretch (basic residues) spans 483–492; the sequence is RGHRGKRKSA. The span at 664-713 shows a compositional bias: polar residues; that stretch reads TLSTEAAQPCSTSQPPLLGDTNSLVNNSKQCNSSACSPKPDTNLQASGRQ. Residues 693–1104 form a required for interaction with POLH and POLH DNA synthesis stimulation region; that stretch reads QCNSSACSPK…DGNIFIYRYF (412 aa). An interaction with RAD51 and BRCA2 region spans residues 771-1104; the sequence is GNLQLVSELK…DGNIFIYRYF (334 aa). Residues 771-1104 form an interaction with RAD51, BRCA2 and POLH region; that stretch reads GNLQLVSELK…DGNIFIYRYF (334 aa). WD repeat units follow at residues 772–833, 835–879, 880–927, 928–970, 976–1027, 1033–1071, and 1073–1104; these read NLQL…WHFT, VPVL…QVLL, KSGD…LMPP, DETV…MHID, SVCH…LLCS, AGRF…LLPP, and SDQS…YRYF.

In terms of assembly, homooligomer; dissociated upon DNA damage thus allowing association with BRCA1. Oligomerization is essential for its focal accumulation at DNA breaks. Part of a BRCA complex containing BRCA1, BRCA2 and PALB2. Interacts with BRCA1 and this interaction is essential for its function in HRR. Interacts with RAD51AP1 and MORF4L1/MRG15. Component of the homologous recombination repair (HR) complex composed of ERCC5/XPG, BRCA2, PALB2, DSS1 and RAD51. Within the complex, interacts with ERCC5/XPG and BRCA2. Interacts with BRCA2, RAD51C, RAD51 and XRCC3; the interactions are direct and it may serve as a scaffold for a HR complex containing PALB2, BRCA2, RAD51C, RAD51 and XRCC3. Interacts with POLH; the interaction is direct.

It localises to the nucleus. Functionally, plays a critical role in homologous recombination repair (HRR) through its ability to recruit BRCA2 and RAD51 to DNA breaks. Strongly stimulates the DNA strand-invasion activity of RAD51, stabilizes the nucleoprotein filament against a disruptive BRC3-BRC4 polypeptide and helps RAD51 to overcome the suppressive effect of replication protein A (RPA). Functionally cooperates with RAD51AP1 in promoting of D-loop formation by RAD51. Serves as the molecular scaffold in the formation of the BRCA1-PALB2-BRCA2 complex which is essential for homologous recombination. Via its WD repeats is proposed to scaffold a HR complex containing RAD51C and BRCA2 which is thought to play a role in HR-mediated DNA repair. Essential partner of BRCA2 that promotes the localization and stability of BRCA2. Also enables its recombinational repair and checkpoint functions of BRCA2. May act by promoting stable association of BRCA2 with nuclear structures, allowing BRCA2 to escape the effects of proteasome-mediated degradation. Binds DNA with high affinity for D loop, which comprises single-stranded, double-stranded and branched DNA structures. May play a role in the extension step after strand invasion at replication-dependent DNA double-strand breaks; together with BRCA2 is involved in both POLH localization at collapsed replication forks and DNA polymerization activity. In Mus musculus (Mouse), this protein is Partner and localizer of BRCA2 (Palb2).